Here is a 498-residue protein sequence, read N- to C-terminus: Excisase C (498 aa).

Positions 263–446 (KIIYSFDLFE…FGIENRKKAF (184 aa)) constitute a Tyr recombinase domain. Active-site residues include R306, K336, R401, and H424. Residue Y433 is the O-(3'-phospho-DNA)-tyrosine intermediate of the active site.

It belongs to the XisA/XisC recombinase family.

In terms of biological role, essential for DNA excision. Site specific recombinase necessary for the excision of the 10.5 kb hupL element during heterocyst differentiation. The polypeptide is Excisase C (xisC) (Nostoc sp. (strain PCC 7120 / SAG 25.82 / UTEX 2576)).